Reading from the N-terminus, the 346-residue chain is Fe(3+) ions import ATP-binding protein FbpC 1 (346 aa).

Residues 5-235 (LEVDGVDKSF…PIDVPTAEFI (231 aa)) form the ABC transporter domain. An ATP-binding site is contributed by 37 to 44 (GPSGCGKT).

This sequence belongs to the ABC transporter superfamily. Fe(3+) ion importer (TC 3.A.1.10) family. As to quaternary structure, the complex is composed of two ATP-binding proteins (FbpC), two transmembrane proteins (FbpB) and a solute-binding protein (FbpA).

It is found in the cell membrane. The catalysed reaction is Fe(3+)(out) + ATP + H2O = Fe(3+)(in) + ADP + phosphate + H(+). Functionally, part of the ABC transporter complex FbpABC involved in Fe(3+) ions import. Responsible for energy coupling to the transport system. This chain is Fe(3+) ions import ATP-binding protein FbpC 1, found in Rhodococcus jostii (strain RHA1).